A 157-amino-acid polypeptide reads, in one-letter code: DNA gyrase inhibitor (157 aa).

This sequence belongs to the DNA gyrase inhibitor family. In terms of assembly, interacts with DNA gyrase.

The protein resides in the cytoplasm. Functionally, inhibits the supercoiling activity of DNA gyrase. Acts by inhibiting DNA gyrase at an early step, prior to (or at the step of) binding of DNA by the gyrase. It protects cells against toxins that target DNA gyrase, by inhibiting activity of these toxins and reducing the formation of lethal double-strand breaks in the cell. This is DNA gyrase inhibitor from Klebsiella pneumoniae (strain 342).